Here is a 356-residue protein sequence, read N- to C-terminus: GTPase Obg (356 aa).

Positions 1 to 159 (MKFLDEAKVY…RWIWLRMKLI (159 aa)) constitute an Obg domain. An OBG-type G domain is found at 160–327 (ADAGLVGLPN…ALRKLADVVG (168 aa)). GTP is bound by residues 166-173 (GLPNAGKS), 191-195 (FTTLH), 212-215 (DIPG), 279-282 (NKID), and 308-310 (SGA). S173 and T193 together coordinate Mg(2+). Residues 327–356 (GEQPVSSKAKNAVESAATEEPWAAPVPPQG) are disordered.

It belongs to the TRAFAC class OBG-HflX-like GTPase superfamily. OBG GTPase family. As to quaternary structure, monomer. Mg(2+) is required as a cofactor.

The protein resides in the cytoplasm. In terms of biological role, an essential GTPase which binds GTP, GDP and possibly (p)ppGpp with moderate affinity, with high nucleotide exchange rates and a fairly low GTP hydrolysis rate. Plays a role in control of the cell cycle, stress response, ribosome biogenesis and in those bacteria that undergo differentiation, in morphogenesis control. This is GTPase Obg from Bradyrhizobium sp. (strain ORS 278).